Consider the following 369-residue polypeptide: Tetraacyldisaccharide 4'-kinase (369 aa).

Position 68-75 (68-75 (VVGGTGKT)) interacts with ATP.

It belongs to the LpxK family.

The enzyme catalyses a lipid A disaccharide + ATP = a lipid IVA + ADP + H(+). The protein operates within glycolipid biosynthesis; lipid IV(A) biosynthesis; lipid IV(A) from (3R)-3-hydroxytetradecanoyl-[acyl-carrier-protein] and UDP-N-acetyl-alpha-D-glucosamine: step 6/6. Transfers the gamma-phosphate of ATP to the 4'-position of a tetraacyldisaccharide 1-phosphate intermediate (termed DS-1-P) to form tetraacyldisaccharide 1,4'-bis-phosphate (lipid IVA). The sequence is that of Tetraacyldisaccharide 4'-kinase from Chlamydia trachomatis serovar D (strain ATCC VR-885 / DSM 19411 / UW-3/Cx).